We begin with the raw amino-acid sequence, 154 residues long: Cyanate hydratase (154 aa).

Catalysis depends on residues Arg100, Glu103, and Ser126.

It belongs to the cyanase family.

It carries out the reaction cyanate + hydrogencarbonate + 3 H(+) = NH4(+) + 2 CO2. In terms of biological role, catalyzes the reaction of cyanate with bicarbonate to produce ammonia and carbon dioxide. The sequence is that of Cyanate hydratase from Aspergillus terreus (strain NIH 2624 / FGSC A1156).